Consider the following 233-residue polypeptide: Snake venom serine protease BthaTL (233 aa).

The Peptidase S1 domain maps to 1-224 (VIGGDECDIN…YLPWIQSIIA (224 aa)). Cystine bridges form between Cys-7–Cys-138, Cys-25–Cys-41, Cys-73–Cys-231, Cys-117–Cys-185, Cys-149–Cys-164, and Cys-175–Cys-200. Catalysis depends on charge relay system residues His-40 and Asp-85. The active-site Charge relay system is the Ser-179.

It belongs to the peptidase S1 family. Snake venom subfamily. In terms of assembly, monomer. Expressed by the venom gland.

The protein resides in the secreted. In terms of biological role, snake venom serine protease that may act in the hemostasis system of the prey. The protein is Snake venom serine protease BthaTL of Bothrops alternatus (Urutu).